We begin with the raw amino-acid sequence, 188 residues long: Cell division protein SepF (188 aa).

Residues 152-162 (TSHDEASTPTV) are compositionally biased toward polar residues. The segment at 152–188 (TSHDEASTPTVVSRDAEAEQQQEAAAAPSPAWGATAL) is disordered.

Belongs to the SepF family. In terms of assembly, homodimer. Interacts with FtsZ.

It is found in the cytoplasm. Its function is as follows. Cell division protein that is part of the divisome complex and is recruited early to the Z-ring. Probably stimulates Z-ring formation, perhaps through the cross-linking of FtsZ protofilaments. Its function overlaps with FtsA. The polypeptide is Cell division protein SepF (Parasynechococcus marenigrum (strain WH8102)).